Reading from the N-terminus, the 309-residue chain is MPKVRTKDLIEQFQLELISGEEGIHRPIDTSDLSRPGIEMAGFFTYYPADRVQLLGKTELTFFDTLTSEQKQERMKALCTEETPCIIVTRNQDVPDELLQASRESGMPLLRSSQTTTRLSSRLTNYLEGKLAPTTAVHGVLVDIYGVGVLITGQSGVGKSETALELVKRGHRLVADDSVEIRQEDEDMLVGSSPDLIEHLLEIRGLGIINVMTLFGAGAVRNYKRITLVINLEIWDQKKNYDRLGLDEEKMKIIDTELTKITLPVRPGRNLAVIIEVAAMNFRLKRMGVNAAQQFSERLMSAIELGNQE.

Active-site residues include histidine 138 and lysine 159. 153 to 160 serves as a coordination point for ATP; sequence GQSGVGKS. Serine 160 is a binding site for Mg(2+). Aspartate 177 functions as the Proton acceptor; for phosphorylation activity. Proton donor; for dephosphorylation activity in the catalytic mechanism. The tract at residues 201 to 210 is important for the catalytic mechanism of both phosphorylation and dephosphorylation; sequence LEIRGLGIIN. Position 202 (glutamate 202) interacts with Mg(2+). Residue arginine 243 is part of the active site. Residues 264–269 form an important for the catalytic mechanism of dephosphorylation region; sequence PVRPGR.

The protein belongs to the HPrK/P family. Homohexamer. Mg(2+) serves as cofactor.

It catalyses the reaction [HPr protein]-L-serine + ATP = [HPr protein]-O-phospho-L-serine + ADP + H(+). It carries out the reaction [HPr protein]-O-phospho-L-serine + phosphate + H(+) = [HPr protein]-L-serine + diphosphate. Catalyzes the ATP- as well as the pyrophosphate-dependent phosphorylation of a specific serine residue in HPr, a phosphocarrier protein of the phosphoenolpyruvate-dependent sugar phosphotransferase system (PTS). HprK/P also catalyzes the pyrophosphate-producing, inorganic phosphate-dependent dephosphorylation (phosphorolysis) of seryl-phosphorylated HPr (P-Ser-HPr). The two antagonistic activities of HprK/P are regulated by several intracellular metabolites, which change their concentration in response to the absence or presence of rapidly metabolisable carbon sources (glucose, fructose, etc.) in the growth medium. Also phosphorylates/dephosphorylates the HPr-like catabolite repression protein crh on a specific serine residue. Therefore, by controlling the phosphorylation state of HPr and crh, HPrK/P is a sensor enzyme that plays a major role in the regulation of carbon metabolism and sugar transport: it mediates carbon catabolite repression (CCR), and regulates PTS-catalyzed carbohydrate uptake and inducer exclusion. This is HPr kinase/phosphorylase from Bacillus cereus (strain B4264).